The sequence spans 297 residues: ATP phosphoribosyltransferase (297 aa).

The protein belongs to the ATP phosphoribosyltransferase family.

It is found in the cytoplasm. It carries out the reaction 1-(5-phospho-beta-D-ribosyl)-ATP + diphosphate = 5-phospho-alpha-D-ribose 1-diphosphate + ATP. It functions in the pathway amino-acid biosynthesis; L-histidine biosynthesis; L-histidine from 5-phospho-alpha-D-ribose 1-diphosphate: step 1/9. Its function is as follows. Catalyzes the condensation of ATP and 5-phosphoribose 1-diphosphate to form N'-(5'-phosphoribosyl)-ATP (PR-ATP). Has a crucial role in the pathway because the rate of histidine biosynthesis seems to be controlled primarily by regulation of the enzymatic activity. This chain is ATP phosphoribosyltransferase (HIS1), found in Eremothecium gossypii (strain ATCC 10895 / CBS 109.51 / FGSC 9923 / NRRL Y-1056) (Yeast).